The primary structure comprises 2530 residues: Agglutinin-like protein 2 (2530 aa).

Positions 1–17 (MLLQFLLLSLCVSVATA) are cleaved as a signal peptide. 4 disulfide bridges follow: Cys-73-Cys-150, Cys-96-Cys-112, Cys-205-Cys-297, and Cys-227-Cys-256. 2 N-linked (GlcNAc...) asparagine glycosylation sites follow: Asn-253 and Asn-315. ALS repeat units lie at residues 364 to 395 (TTIT…VDVP), 400 to 431 (TTVT…VQVP), 437 to 468 (VTTT…IREP), 473 to 504 (VTTT…IREP), 509 to 540 (VTTT…IREP), and 545 to 576 (VTTT…IREP). N-linked (GlcNAc...) asparagine glycosylation is present at Asn-578. Residues 581–612 (VTTTEYWSQSYVTTSTITAPPGGTDTVIIREP) form an ALS 7 repeat. A glycan (N-linked (GlcNAc...) asparagine) is linked at Asn-614. 7 ALS repeats span residues 617 to 648 (VTTT…IREP), 653 to 684 (VTTT…IREP), 689 to 720 (VTTT…IREP), 725 to 756 (VTTT…IREP), 761 to 792 (VTTT…IREP), 797 to 828 (VTTT…IREP), and 833 to 864 (VTTT…IREP). Asn-866 carries an N-linked (GlcNAc...) asparagine glycan. ALS repeat units lie at residues 869–900 (VTTT…IREP), 905–936 (VTTT…IREP), 941–972 (VTTT…IREP), and 977–1008 (VTTT…IREP). Low complexity predominate over residues 954–967 (TTTVTGPPGGTDTV). Positions 954 to 975 (TTTVTGPPGGTDTVIIREPPNP) are disordered. Asn-1010 carries N-linked (GlcNAc...) asparagine glycosylation. ALS repeat units lie at residues 1013-1044 (VTTT…IREP), 1049-1077 (VTTT…TVII), 1085-1116 (VTTT…IREP), and 1121-1152 (VTTT…IREP). Asn-1154 is a glycosylation site (N-linked (GlcNAc...) asparagine). 6 ALS repeats span residues 1157-1188 (VTTT…IREP), 1193-1224 (VTTT…IREP), 1229-1260 (VTTT…IREP), 1265-1296 (VTTT…IREP), 1301-1332 (VTTT…IREP), and 1337-1368 (VTTT…IREP). Asn-1370 carries an N-linked (GlcNAc...) asparagine glycan. An ALS 29 repeat occupies 1373 to 1404 (VTTTEYWSQSYATTTTVTAPPGGTATVIIREP). The N-linked (GlcNAc...) asparagine glycan is linked to Asn-1406. An ALS 30 repeat occupies 1409–1440 (VTTTEYWSQSYATTTTITAPPGDTDTVIIREP). N-linked (GlcNAc...) asparagine glycosylation is present at Asn-1442. ALS repeat units follow at residues 1445–1476 (VTTT…IREP) and 1481–1512 (VTTT…IREP). A glycan (N-linked (GlcNAc...) asparagine) is linked at Asn-1514. An ALS 33 repeat occupies 1517–1548 (VTTTEYWSQSYATTTTVTAPPGGTATVIIREP). N-linked (GlcNAc...) asparagine glycosylation occurs at Asn-1550. One copy of the ALS 34 repeat lies at 1553 to 1584 (VTTTEYWSQSYATTTTITAPPGDTDTVIIREP). N-linked (GlcNAc...) asparagine glycosylation occurs at Asn-1586. The ALS 35 repeat unit spans residues 1589-1620 (VTTTEYWSQSYATTTTVTAPPGGTDTVIIREP). N-linked (GlcNAc...) asparagine glycosylation occurs at Asn-1622. Residues 1625–1656 (VTTTEYWSQSYATTTTVTAPPGGTATVIIREP) form an ALS 36 repeat. The N-linked (GlcNAc...) asparagine glycan is linked to Asn-1658. ALS repeat units follow at residues 1661–1692 (VTTT…IREP) and 1697–1728 (VTTT…IREP). An N-linked (GlcNAc...) asparagine glycan is attached at Asn-1730. One copy of the ALS 39 repeat lies at 1733-1764 (VTTTEYWSQSYATTTTVTAPPGGTDTVIIREP). Asn-1766 is a glycosylation site (N-linked (GlcNAc...) asparagine). ALS repeat units follow at residues 1769–1800 (VTTT…IREP) and 1805–1836 (VTTT…IREP). N-linked (GlcNAc...) asparagine glycosylation is present at Asn-1838. ALS repeat units follow at residues 1841–1872 (VTTT…IREP) and 1877–1907 (VTTT…RIRE). The N-linked (GlcNAc...) asparagine glycan is linked to Asn-1910. ALS repeat units lie at residues 1913-1944 (VTTT…IREP) and 1949-1980 (VTTT…IREP). An N-linked (GlcNAc...) asparagine glycan is attached at Asn-1982. 3 ALS repeats span residues 1985–2016 (VTTT…IREP), 2021–2052 (VTTT…IREP), and 2057–2088 (VTTT…IREP). N-linked (GlcNAc...) asparagine glycosylation occurs at Asn-2090. 2 ALS repeats span residues 2093–2124 (VTTT…IREP) and 2129–2157 (VTTT…SVII). The N-linked (GlcNAc...) asparagine glycan is linked to Asn-2197. 2 disordered regions span residues 2200–2235 (VTHL…GSEN) and 2274–2494 (TTII…QQTT). The segment covering 2204–2233 (PSSSSKPVDIPSSDVVTSTNDNSLTSLTGS) has biased composition (low complexity). N-linked (GlcNAc...) asparagine glycosylation occurs at Asn-2281. A compositionally biased stretch (low complexity) spans 2282-2296 (GSGKSKSGELSSTGS). Composition is skewed to polar residues over residues 2329–2420 (STET…SATA) and 2429–2452 (NGAT…TTNI). 2 N-linked (GlcNAc...) asparagine glycosylation sites follow: Asn-2444 and Asn-2466. Low complexity-rich tracts occupy residues 2453–2471 (QGGN…TGEP) and 2482–2494 (SISQ…QQTT). A lipid anchor (GPI-anchor amidated aspartate) is attached at Asp-2507. The propeptide at 2508–2530 (GSGSIVQHSGWLYVLLTAISIFF) is removed in mature form.

Belongs to the ALS family. N-glycosylated and O-glycosylated. Post-translationally, the GPI-anchor is attached to the protein in the endoplasmic reticulum and serves to target the protein to the cell surface. There, the glucosamine-inositol phospholipid moiety is cleaved off and the GPI-modified mannoprotein is covalently attached via its lipidless GPI glycan remnant to the 1,6-beta-glucan of the outer cell wall layer.

It localises to the cell membrane. It is found in the secreted. Its subcellular location is the cell wall. Functionally, cell surface adhesion protein which mediates both yeast-to-host tissue adherence and yeast aggregation. Plays an important role in the pathogenesis of C.albicans infections. The chain is Agglutinin-like protein 2 (ALS2) from Candida albicans (strain SC5314 / ATCC MYA-2876) (Yeast).